The chain runs to 612 residues: uncharacterized protein (612 aa).

It localises to the plastid. Its subcellular location is the chloroplast. This is an uncharacterized protein from Pyropia yezoensis (Susabi-nori).